The chain runs to 285 residues: Energy-coupling factor transporter ATP-binding protein EcfA2 (285 aa).

The 243-residue stretch at 3 to 245 (IKFKKVDYIY…RKWLKKHNLS (243 aa)) folds into the ABC transporter domain. 40 to 47 (GHTGSGKS) serves as a coordination point for ATP.

Belongs to the ABC transporter superfamily. Energy-coupling factor EcfA family. In terms of assembly, forms a stable energy-coupling factor (ECF) transporter complex composed of 2 membrane-embedded substrate-binding proteins (S component), 2 ATP-binding proteins (A component) and 2 transmembrane proteins (T component).

It is found in the cell membrane. Its function is as follows. ATP-binding (A) component of a common energy-coupling factor (ECF) ABC-transporter complex. Unlike classic ABC transporters this ECF transporter provides the energy necessary to transport a number of different substrates. This is Energy-coupling factor transporter ATP-binding protein EcfA2 from Lactobacillus acidophilus (strain ATCC 700396 / NCK56 / N2 / NCFM).